A 609-amino-acid chain; its full sequence is Proteasome-associated ATPase (609 aa).

Residues 1–22 (MGESERSEAFNPPREAGMSSGD) are disordered. Residues 20-96 (SGDIAELEQL…LREEVDRLGQ (77 aa)) adopt a coiled-coil conformation. 296-301 (GCGKTL) is a binding site for ATP. Residues 608–609 (YL) form a docks into pockets in the proteasome alpha-ring region.

Belongs to the AAA ATPase family. In terms of assembly, homohexamer. Assembles into a hexameric ring structure that caps the 20S proteasome core. Strongly interacts with the prokaryotic ubiquitin-like protein Pup through a hydrophobic interface; the interacting region of ARC lies in its N-terminal coiled-coil domain. There is one Pup binding site per ARC hexamer ring. Upon ATP-binding, the C-terminus of ARC interacts with the alpha-rings of the proteasome core, possibly by binding to the intersubunit pockets.

The protein operates within protein degradation; proteasomal Pup-dependent pathway. Functionally, ATPase which is responsible for recognizing, binding, unfolding and translocation of pupylated proteins into the bacterial 20S proteasome core particle. May be essential for opening the gate of the 20S proteasome via an interaction with its C-terminus, thereby allowing substrate entry and access to the site of proteolysis. Thus, the C-termini of the proteasomal ATPase may function like a 'key in a lock' to induce gate opening and therefore regulate proteolysis. The chain is Proteasome-associated ATPase from Mycobacterium leprae (strain Br4923).